An 88-amino-acid chain; its full sequence is Large ribosomal subunit protein bL31B (88 aa).

It belongs to the bacterial ribosomal protein bL31 family. Type B subfamily. As to quaternary structure, part of the 50S ribosomal subunit.

In Glaesserella parasuis serovar 5 (strain SH0165) (Haemophilus parasuis), this protein is Large ribosomal subunit protein bL31B.